Reading from the N-terminus, the 246-residue chain is MNNNTTAPTYTLRGLQLIGWRDMQHALDYLFADGQLKQGTLVAINAEKMLTIEDNAEVRALINAAEFKYADGISVVRSVRKKYPQAQVSRVAGADLWEELMARAGKEGTPVFLVGGKPEVLAQTEAKLRNQWNVNIVGSQDGYFKPEQRQALFERIHASGAQIVTVAMGSPKQEIFMRDCRLVHPDALYMGVGGTYDVFTGHVKRAPKIWQTLGLEWLYRLLSQPSRIKRQLRLLRYLRWHYTGNL.

Belongs to the glycosyltransferase 26 family.

It carries out the reaction UDP-N-acetyl-alpha-D-mannosaminouronate + N-acetyl-alpha-D-glucosaminyl-di-trans,octa-cis-undecaprenyl diphosphate = beta-D-ManNAcA-(1-&gt;4)-alpha-D-GlcNAc-di-trans,octa-cis-undecaprenyl diphosphate + UDP + H(+). It participates in bacterial outer membrane biogenesis; enterobacterial common antigen biosynthesis. In terms of biological role, catalyzes the synthesis of Und-PP-GlcNAc-ManNAcA (Lipid II), the second lipid-linked intermediate involved in enterobacterial common antigen (ECA) synthesis. The sequence is that of UDP-N-acetyl-D-mannosaminuronic acid transferase from Escherichia fergusonii (strain ATCC 35469 / DSM 13698 / CCUG 18766 / IAM 14443 / JCM 21226 / LMG 7866 / NBRC 102419 / NCTC 12128 / CDC 0568-73).